A 215-amino-acid chain; its full sequence is uncharacterized protein (215 aa).

2 disordered regions span residues 1–144 (MPKG…PYLR) and 156–215 (IQGH…GAPA). Low complexity-rich tracts occupy residues 16–29 (ASTP…ASPT), 49–58 (SSSWPKSPIK), 85–96 (SGSSSPGPSSSR), and 104–127 (STAA…RAAP).

This is an uncharacterized protein from Homo sapiens (Human).